The following is a 175-amino-acid chain: Flagellar assembly factor FliW (175 aa).

The protein belongs to the FliW family. In terms of assembly, interacts with translational regulator CsrA and flagellin(s).

Its subcellular location is the cytoplasm. In terms of biological role, acts as an anti-CsrA protein, binds CsrA and prevents it from repressing translation of its target genes, one of which is flagellin. Binds to flagellin and participates in the assembly of the flagellum. The protein is Flagellar assembly factor FliW of Bdellovibrio bacteriovorus (strain ATCC 15356 / DSM 50701 / NCIMB 9529 / HD100).